A 297-amino-acid chain; its full sequence is 32 kDa beta-galactoside-binding lectin lec-3 (297 aa).

Galectin domains follow at residues 11–142 (YRSK…VQWG) and 151–290 (ESGI…IQVV). 224–230 (WGNEERE) serves as a coordination point for a beta-D-galactoside.

Binds galactose. The sequence is that of 32 kDa beta-galactoside-binding lectin lec-3 (lec-3) from Caenorhabditis elegans.